The primary structure comprises 968 residues: RNA polymerase-associated protein RapA (968 aa).

Positions 163–332 constitute a Helicase ATP-binding domain; the sequence is EVGQRFAPRV…FARLRLLDPD (170 aa). 176–183 is an ATP binding site; sequence DEVGLGKT. The short motif at 278-281 is the DEAH box element; sequence DEAH. A Helicase C-terminal domain is found at 491–645; sequence RVDWLIDFLK…TCPTGHILFN (155 aa).

Belongs to the SNF2/RAD54 helicase family. RapA subfamily. In terms of assembly, interacts with the RNAP. Has a higher affinity for the core RNAP than for the holoenzyme. Its ATPase activity is stimulated by binding to RNAP.

Its function is as follows. Transcription regulator that activates transcription by stimulating RNA polymerase (RNAP) recycling in case of stress conditions such as supercoiled DNA or high salt concentrations. Probably acts by releasing the RNAP, when it is trapped or immobilized on tightly supercoiled DNA. Does not activate transcription on linear DNA. Probably not involved in DNA repair. The protein is RNA polymerase-associated protein RapA of Shewanella loihica (strain ATCC BAA-1088 / PV-4).